The primary structure comprises 448 residues: UDP-N-acetylmuramoylalanine--D-glutamate ligase (448 aa).

112 to 118 lines the ATP pocket; the sequence is GSNAKST.

It belongs to the MurCDEF family.

Its subcellular location is the cytoplasm. It catalyses the reaction UDP-N-acetyl-alpha-D-muramoyl-L-alanine + D-glutamate + ATP = UDP-N-acetyl-alpha-D-muramoyl-L-alanyl-D-glutamate + ADP + phosphate + H(+). It participates in cell wall biogenesis; peptidoglycan biosynthesis. In terms of biological role, cell wall formation. Catalyzes the addition of glutamate to the nucleotide precursor UDP-N-acetylmuramoyl-L-alanine (UMA). This chain is UDP-N-acetylmuramoylalanine--D-glutamate ligase, found in Acinetobacter baylyi (strain ATCC 33305 / BD413 / ADP1).